We begin with the raw amino-acid sequence, 743 residues long: Polyribonucleotide nucleotidyltransferase (743 aa).

Mg(2+) contacts are provided by aspartate 494 and aspartate 500. Residues 561–620 (PQHAEVFVNPDIIRLIIGPGGKNIKAITAATGASVDIEDSGRVSIFAPTAEALEKAREMV) enclose the KH domain. The 75-residue stretch at 630-704 (GKNYNAKVRK…SRKAVLLEEQ (75 aa)) folds into the S1 motif domain. Positions 702–743 (EEQGHPWNPEDTARPQRSDRGDRGDRRGDRGGRDRRDRGDRR) are disordered. Over residues 712 to 743 (DTARPQRSDRGDRGDRRGDRGGRDRRDRGDRR) the composition is skewed to basic and acidic residues.

The protein belongs to the polyribonucleotide nucleotidyltransferase family. Requires Mg(2+) as cofactor.

It is found in the cytoplasm. It catalyses the reaction RNA(n+1) + phosphate = RNA(n) + a ribonucleoside 5'-diphosphate. Its function is as follows. Involved in mRNA degradation. Catalyzes the phosphorolysis of single-stranded polyribonucleotides processively in the 3'- to 5'-direction. In Desulfovibrio desulfuricans (strain ATCC 27774 / DSM 6949 / MB), this protein is Polyribonucleotide nucleotidyltransferase.